We begin with the raw amino-acid sequence, 211 residues long: Peptidyl-prolyl cis-trans isomerase-like 3 (211 aa).

The PPIase cyclophilin-type domain maps to 1–204 (MSVTLHTTHG…ETLRINRVTI (204 aa)).

This sequence belongs to the cyclophilin-type PPIase family. PPIL3 subfamily.

The enzyme catalyses [protein]-peptidylproline (omega=180) = [protein]-peptidylproline (omega=0). Functionally, PPIases accelerate the folding of proteins. It catalyzes the cis-trans isomerization of proline imidic peptide bonds in oligopeptides. This is Peptidyl-prolyl cis-trans isomerase-like 3 (cyp10) from Emericella nidulans (strain FGSC A4 / ATCC 38163 / CBS 112.46 / NRRL 194 / M139) (Aspergillus nidulans).